Reading from the N-terminus, the 403-residue chain is MIRKKNNKVVLAYSGGLDTSAIIPWLKENYNFEVVAFVADIGQSKKDLNGIEKKSLESGASSCHVFDLKEEFIENYVYPVLKTGALYEGSYLLGTAMARPIIAKKQVELALNIGANSLCHGATGKGNDQVRFEMAYAALAPNLNVIAPWREWNLNSRESLLKYLDKKNISTTATLEKIYSKDENSWHISTEGGLLENPWNQSNEDCWSWTVNPEDAPEKPEYVSLQLKEGCVVSVNNQKLNPLKCVEELNSLGAKHGIGRIDIIENRLIGMKSRGCYETPGGTIIMTAIKAIEQLVLDRESFRWREKIGLEMSSIVYDGRWFSPIRKSLQAAADSLSLEITGEVILKLYKGSVTAVQKKSPNSLYSEEYATFGEDKVYKQSDADGFIRLFSLSSKIRAQNMLK.

ATP-binding positions include 12 to 20 and A39; that span reads AYSGGLDTS. Residue Y91 coordinates L-citrulline. G121 provides a ligand contact to ATP. Positions 123, 127, and 128 each coordinate L-aspartate. N127 lines the L-citrulline pocket. L-citrulline-binding residues include R131, S180, S189, E265, and Y277.

It belongs to the argininosuccinate synthase family. Type 1 subfamily. Homotetramer.

The protein resides in the cytoplasm. The enzyme catalyses L-citrulline + L-aspartate + ATP = 2-(N(omega)-L-arginino)succinate + AMP + diphosphate + H(+). Its pathway is amino-acid biosynthesis; L-arginine biosynthesis; L-arginine from L-ornithine and carbamoyl phosphate: step 2/3. The sequence is that of Argininosuccinate synthase from Buchnera aphidicola subsp. Acyrthosiphon pisum (strain 5A).